Reading from the N-terminus, the 804-residue chain is Protein SEY1 homolog 1 (804 aa).

Over 1–638 (MEQIITGEGQ…SVLASQNNEH (638 aa)) the chain is Cytoplasmic. One can recognise a GB1/RHD3-type G domain in the interval 28–245 (GTDYHMVSII…EENYLFKEKS (218 aa)). 38–45 (GCQSSGKS) contacts GTP. The chain crosses the membrane as a helical span at residues 639-659 (IPPWAWFLFLFSCSDYILWWL). The Lumenal segment spans residues 660-662 (SNP). Residues 663 to 683 (LLFSLTVLFGGTYLVLNQLGL) form a helical membrane-spanning segment. At 684–804 (WDTAVQKLLD…RKRVRVGTLV (121 aa)) the chain is on the cytoplasmic side. The tract at residues 706 to 804 (PDENNETETN…RKRVRVGTLV (99 aa)) is disordered. Residues 751–791 (QGLTKTESNVTFANVSNANDEQSLTKNNTEDSLNTGSSSSG) are compositionally biased toward polar residues. Residues 792 to 804 (QRHRKRVRVGTLV) are compositionally biased toward basic residues.

Belongs to the TRAFAC class dynamin-like GTPase superfamily. GB1/RHD3 GTPase family. RHD3 subfamily.

It localises to the endoplasmic reticulum membrane. In terms of biological role, probable GTP-binding protein that may be involved in cell development. The protein is Protein SEY1 homolog 1 of Trichomonas vaginalis (strain ATCC PRA-98 / G3).